A 102-amino-acid polypeptide reads, in one-letter code: Monothiol glutaredoxin-S1 (102 aa).

The 101-residue stretch at 1-101 folds into the Glutaredoxin domain; sequence MEKISNLLED…SLLRRAGAIW (101 aa). C21 contributes to the [2Fe-2S] cluster binding site.

Belongs to the glutaredoxin family. CC-type subfamily.

It localises to the cytoplasm. May only reduce GSH-thiol disulfides, but not protein disulfides. The polypeptide is Monothiol glutaredoxin-S1 (GRXS1) (Arabidopsis thaliana (Mouse-ear cress)).